The chain runs to 474 residues: Glycogen synthase (474 aa).

Residue lysine 15 participates in ADP-alpha-D-glucose binding.

Belongs to the glycosyltransferase 1 family. Bacterial/plant glycogen synthase subfamily.

It carries out the reaction [(1-&gt;4)-alpha-D-glucosyl](n) + ADP-alpha-D-glucose = [(1-&gt;4)-alpha-D-glucosyl](n+1) + ADP + H(+). The protein operates within glycan biosynthesis; glycogen biosynthesis. In terms of biological role, synthesizes alpha-1,4-glucan chains using ADP-glucose. The polypeptide is Glycogen synthase (Chlamydia trachomatis serovar L2b (strain UCH-1/proctitis)).